The sequence spans 84 residues: Small ribosomal subunit protein uS17 (84 aa).

The protein belongs to the universal ribosomal protein uS17 family. Part of the 30S ribosomal subunit.

One of the primary rRNA binding proteins, it binds specifically to the 5'-end of 16S ribosomal RNA. This is Small ribosomal subunit protein uS17 from Porphyromonas gingivalis (strain ATCC 33277 / DSM 20709 / CIP 103683 / JCM 12257 / NCTC 11834 / 2561).